A 616-amino-acid chain; its full sequence is Proline--tRNA ligase (616 aa).

This sequence belongs to the class-II aminoacyl-tRNA synthetase family. ProS type 1 subfamily. Homodimer.

Its subcellular location is the cytoplasm. It carries out the reaction tRNA(Pro) + L-proline + ATP = L-prolyl-tRNA(Pro) + AMP + diphosphate. Functionally, catalyzes the attachment of proline to tRNA(Pro) in a two-step reaction: proline is first activated by ATP to form Pro-AMP and then transferred to the acceptor end of tRNA(Pro). As ProRS can inadvertently accommodate and process non-cognate amino acids such as alanine and cysteine, to avoid such errors it has two additional distinct editing activities against alanine. One activity is designated as 'pretransfer' editing and involves the tRNA(Pro)-independent hydrolysis of activated Ala-AMP. The other activity is designated 'posttransfer' editing and involves deacylation of mischarged Ala-tRNA(Pro). The misacylated Cys-tRNA(Pro) is not edited by ProRS. In Streptococcus sanguinis (strain SK36), this protein is Proline--tRNA ligase.